The sequence spans 142 residues: Small heat shock protein IbpB (142 aa).

Residues 26–137 (AGEGQSFPPY…AAQRIAISER (112 aa)) form the sHSP domain.

The protein belongs to the small heat shock protein (HSP20) family. Homodimer. Forms homomultimers of about 100-150 subunits at optimal growth temperatures. Conformation changes to oligomers at high temperatures or high ionic concentrations. The decrease in size of the multimers is accompanied by an increase in chaperone activity.

Its subcellular location is the cytoplasm. Functionally, associates with aggregated proteins, together with IbpA, to stabilize and protect them from irreversible denaturation and extensive proteolysis during heat shock and oxidative stress. Aggregated proteins bound to the IbpAB complex are more efficiently refolded and reactivated by the ATP-dependent chaperone systems ClpB and DnaK/DnaJ/GrpE. Its activity is ATP-independent. This Shigella boydii serotype 18 (strain CDC 3083-94 / BS512) protein is Small heat shock protein IbpB.